The following is a 922-amino-acid chain: Isoleucine--tRNA ligase (922 aa).

A 'HIGH' region motif is present at residues 57–67 (PYANGDIHLGH). Glu-553 provides a ligand contact to L-isoleucyl-5'-AMP. A 'KMSKS' region motif is present at residues 594 to 598 (KMSKS). Residue Lys-597 coordinates ATP. Positions 892, 895, 912, and 915 each coordinate Zn(2+).

It belongs to the class-I aminoacyl-tRNA synthetase family. IleS type 1 subfamily. As to quaternary structure, monomer. Zn(2+) is required as a cofactor.

Its subcellular location is the cytoplasm. The catalysed reaction is tRNA(Ile) + L-isoleucine + ATP = L-isoleucyl-tRNA(Ile) + AMP + diphosphate. Catalyzes the attachment of isoleucine to tRNA(Ile). As IleRS can inadvertently accommodate and process structurally similar amino acids such as valine, to avoid such errors it has two additional distinct tRNA(Ile)-dependent editing activities. One activity is designated as 'pretransfer' editing and involves the hydrolysis of activated Val-AMP. The other activity is designated 'posttransfer' editing and involves deacylation of mischarged Val-tRNA(Ile). The polypeptide is Isoleucine--tRNA ligase (Desulfitobacterium hafniense (strain Y51)).